The primary structure comprises 255 residues: FMR1 neighbor protein (255 aa).

The Cytoplasmic portion of the chain corresponds to 1–68; it reads MSSHRRKAKG…ESLKMRVSKP (68 aa). Residues 69–89 form a helical membrane-spanning segment; sequence FGMLMLSIWILLFVCYYLSYY. Residues 90-183 are Extracellular-facing; sequence LCSGSSYFVL…FAPFRDVPKQ (94 aa). The region spanning 125 to 184 is the P-type domain; the sequence is LLNFFFPTTCNLRENQVAKPCNELQDLSESECLRHKCCFSSSGTTSFKCFAPFRDVPKQM. The helical transmembrane segment at 184-204 threads the bilayer; that stretch reads MMQMFGLGAISLILVCLPIYC. Residues 205-255 lie on the Cytoplasmic side of the membrane; sequence RSLFWRSEPADDLQRQDNRVVTGLKKQRRKRKRKSEMLQKAARGREEHGDE. The segment at 220–255 is disordered; sequence QDNRVVTGLKKQRRKRKRKSEMLQKAARGREEHGDE. Basic residues predominate over residues 229-238; it reads KKQRRKRKRK.

Testis-specific. Expressed in melanoma, sarcoma, lung, breast, bladder, esophageal and ovarian cancers.

It is found in the membrane. This is FMR1 neighbor protein from Homo sapiens (Human).